The following is a 594-amino-acid chain: CDPK-related kinase 4 (594 aa).

Residues 1 to 131 (MGHCYSRNIS…DSGGGERLDK (131 aa)) form a disordered region. A lipid anchor (N-myristoyl glycine) is attached at Gly-2. The span at 37–58 (IPQSPVASGTPEVNSYNISPFQ) shows a compositional bias: polar residues. Residues 116 to 131 (VVDHGGDSGGGERLDK) are compositionally biased toward basic and acidic residues. The 263-residue stretch at 143-405 (YELGKEVGRG…AAQALAHPWL (263 aa)) folds into the Protein kinase domain. Residues 149 to 157 (VGRGHFGHT) and Lys-175 each bind ATP. Asp-271 acts as the Proton acceptor in catalysis. A Phosphoserine modification is found at Ser-311. The interval 409-439 (NPGLLLDFSVYKLVKSYIRASPFRRSALKAL) is autoinhibitory domain. Residues 428-448 (ASPFRRSALKALSKAIPDEEL) are calmodulin binding (CaMBD). EF-hand domains are found at residues 446–481 (EELV…ATDA), 482–517 (MMES…VYQL), 518–557 (EALE…GPSA), and 558–587 (YPLL…VTVR). Residues Asp-462, Lys-501, Glu-506, Asn-539, Glu-546, Ser-567, Asp-569, and Lys-571 each coordinate Ca(2+). Residue Ser-573 is modified to Phosphoserine.

This sequence belongs to the protein kinase superfamily. Ser/Thr protein kinase family. CDPK subfamily. In terms of assembly, binds calmodulin (CaM) in a calcium-dependent manner. Autophosphorylated.

Its subcellular location is the cell membrane. The enzyme catalyses L-seryl-[protein] + ATP = O-phospho-L-seryl-[protein] + ADP + H(+). It catalyses the reaction L-threonyl-[protein] + ATP = O-phospho-L-threonyl-[protein] + ADP + H(+). With respect to regulation, activated by calcium and calmodulin. Autophosphorylation may play an important role in the regulation of the kinase activity. Its function is as follows. May play a role in signal transduction pathways that involve calcium as a second messenger. This is CDPK-related kinase 4 (CRK4) from Arabidopsis thaliana (Mouse-ear cress).